Reading from the N-terminus, the 550-residue chain is Membrane protein of ER body 2 (550 aa).

Positions 46–199 (EFRSKAAATA…SSDSEEKSNL (154 aa)) are disordered. Composition is skewed to low complexity over residues 80 to 105 (SVSE…SETG) and 112 to 121 (TGSNEENGNN). Polar residues predominate over residues 122-132 (WLESSSTNLPN). A coiled-coil region spans residues 134-165 (ENKRQRNGEDCEIEEEEENNERSLSDSEEKSN). Positions 143–152 (DCEIEEEEEN) are enriched in acidic residues. 2 stretches are compositionally biased toward basic and acidic residues: residues 153 to 166 (NERS…KSNL) and 185 to 198 (KNER…EKSN). Helical transmembrane passes span 374–394 (STMN…IVLA), 425–445 (ILVA…VYAF), 458–478 (ISVF…KVYV), and 500–520 (SIVV…GEYI). The stretch at 393 to 418 (LAQNFQDLRNSSDQEKDRYEELLGRR) forms a coiled coil.

It belongs to the CCC1 family. As to quaternary structure, interacts directly or indirectly with NAI2.

It localises to the endoplasmic reticulum membrane. In terms of biological role, may sequester excess cytosolic iron and manganese into endoplasmic reticulum to reduce metal ion toxicity. Not essential for the accumulation of ER body components, including PYK10. The protein is Membrane protein of ER body 2 (MEB2) of Arabidopsis thaliana (Mouse-ear cress).